The sequence spans 342 residues: Non-homologous end-joining protein 1 (342 aa).

The next 2 membrane-spanning stretches (helical) occupy residues 27–47 (LLLF…LVSL) and 129–149 (MFYM…NLST). Residues 173-342 (LRDLDGGSKV…RKFGKVRIKN (170 aa)) form an interaction with LIF1 region. A disordered region spans residues 270-342 (ADPTNEARPN…RKFGKVRIKN (73 aa)). Residues 286–296 (PKTDFKPKSRE) are compositionally biased toward basic and acidic residues. The segment covering 297 to 312 (SSTSSQLRLENFSESE) has biased composition (polar residues). A compositionally biased stretch (basic residues) spans 331–342 (KKRKFGKVRIKN).

This sequence belongs to the XRCC4-XLF family. XLF subfamily. As to quaternary structure, interacts (via C-terminus) with LIF1 (via N-terminus); the interaction is direct. Interacts with DNL4.

The protein localises to the cytoplasm. It is found in the nucleus membrane. Functionally, involved in non-homologous end joining (NHEJ). Facilitates the transport of LIF1 into the nucleus, where it can interact with DNA ligase DNL4 to repair double-strand breaks (DSB). Mediates mating-type regulation of NHEJ. Prevents chromosome circularisation by NHEJ in absence of telomerase. This is Non-homologous end-joining protein 1 (NEJ1) from Saccharomyces cerevisiae (strain ATCC 204508 / S288c) (Baker's yeast).